A 230-amino-acid polypeptide reads, in one-letter code: 2,3-bisphosphoglycerate-dependent phosphoglycerate mutase (230 aa).

Residues 8–15 (RHGQSIWN), 21–22 (TG), Arg-60, 87–90 (ERHY), Lys-98, and 114–115 (RR) contribute to the substrate site. Catalysis depends on His-9, which acts as the Tele-phosphohistidine intermediate. The active-site Proton donor/acceptor is Glu-87. Positions 117–143 (YDTPPPALDAEDERHPRHDPRYAGLDP) are disordered. Basic and acidic residues predominate over residues 128–137 (DERHPRHDPR). 183 to 184 (GN) is a binding site for substrate.

This sequence belongs to the phosphoglycerate mutase family. BPG-dependent PGAM subfamily. In terms of assembly, homodimer.

The catalysed reaction is (2R)-2-phosphoglycerate = (2R)-3-phosphoglycerate. Its pathway is carbohydrate degradation; glycolysis; pyruvate from D-glyceraldehyde 3-phosphate: step 3/5. Its function is as follows. Catalyzes the interconversion of 2-phosphoglycerate and 3-phosphoglycerate. This chain is 2,3-bisphosphoglycerate-dependent phosphoglycerate mutase, found in Halorhodospira halophila (strain DSM 244 / SL1) (Ectothiorhodospira halophila (strain DSM 244 / SL1)).